We begin with the raw amino-acid sequence, 94 residues long: DNA-directed RNA polymerase subunit Rpo11 (94 aa).

This sequence belongs to the archaeal Rpo11/eukaryotic RPB11/RPC19 RNA polymerase subunit family. Part of the RNA polymerase complex.

It localises to the cytoplasm. The catalysed reaction is RNA(n) + a ribonucleoside 5'-triphosphate = RNA(n+1) + diphosphate. Functionally, DNA-dependent RNA polymerase (RNAP) catalyzes the transcription of DNA into RNA using the four ribonucleoside triphosphates as substrates. This is DNA-directed RNA polymerase subunit Rpo11 from Natronomonas pharaonis (strain ATCC 35678 / DSM 2160 / CIP 103997 / JCM 8858 / NBRC 14720 / NCIMB 2260 / Gabara) (Halobacterium pharaonis).